Here is a 380-residue protein sequence, read N- to C-terminus: Omega-3 fatty acid desaturase, endoplasmic reticulum (380 aa).

A helical transmembrane segment spans residues 59–78 (VLVVTALAASAISFNSWFFW). Positions 97-101 (HDCGH) match the Histidine box-1 motif. The Histidine box-2 signature appears at 133 to 137 (HRTHH). 2 helical membrane passes run 208 to 231 (GVVTSTLCWGIVLSVLLYLSLTIG) and 238 to 256 (LYGVPYLIFVMWLDFVTYL). Residues 300–304 (HVIHH) carry the Histidine box-3 motif.

It belongs to the fatty acid desaturase type 1 family.

The protein resides in the endoplasmic reticulum membrane. It functions in the pathway lipid metabolism; polyunsaturated fatty acid biosynthesis. In terms of biological role, microsomal (ER) omega-3 fatty acid desaturase introduces the third double bond in the biosynthesis of 18:3 fatty acids, important constituents of plant membranes. It is thought to use cytochrome b5 as an electron donor and to act on fatty acids esterified to phosphatidylcholine and, possibly, other phospholipids. The polypeptide is Omega-3 fatty acid desaturase, endoplasmic reticulum (ARG1) (Vigna radiata var. radiata (Mung bean)).